Here is a 93-residue protein sequence, read N- to C-terminus: Large ribosomal subunit protein uL23 (93 aa).

The protein belongs to the universal ribosomal protein uL23 family. As to quaternary structure, part of the 50S ribosomal subunit. Contacts protein L29, and trigger factor when it is bound to the ribosome.

In terms of biological role, one of the early assembly proteins it binds 23S rRNA. One of the proteins that surrounds the polypeptide exit tunnel on the outside of the ribosome. Forms the main docking site for trigger factor binding to the ribosome. This is Large ribosomal subunit protein uL23 from Nitratiruptor sp. (strain SB155-2).